The primary structure comprises 192 residues: Sarcoplasmic calcium-binding protein, alpha-B and -A chains (192 aa).

At Ala1 the chain carries N-acetylalanine. 4 EF-hand domains span residues 4–39, 56–91, 100–135, and 136–171; these read WDNR…NTLI, IMRN…HCQG, AFKV…RSAF, and AEVK…YAQF. Ca(2+) contacts are provided by Asp17, Asp19, Asp21, Asp28, Asp69, Asn71, Asp73, Glu75, Glu80, Asp113, Asn115, Asp117, Lys119, and Glu124.

In terms of assembly, SCPs from crayfish, lobster, and shrimp are polymorphic dimers; three isotypes (alpha-alpha, alpha-beta, and beta-beta) have been identified.

Like parvalbumins, SCPs seem to be more abundant in fast contracting muscles, but no functional relationship can be established from this distribution. This is Sarcoplasmic calcium-binding protein, alpha-B and -A chains from Penaeus sp. (Penoeid shrimp).